The chain runs to 370 residues: Mitogen-activated protein kinase mpkC (370 aa).

The 280-residue stretch at 19-298 (YANVRPVGLG…AAESLEHPYL (280 aa)) folds into the Protein kinase domain. ATP contacts are provided by residues 25 to 33 (VGLGAFGLV) and Lys-48. Asp-140 serves as the catalytic Proton acceptor. A Phosphothreonine modification is found at Thr-170. The TXY signature appears at 170–172 (TGY). Tyr-172 is subject to Phosphotyrosine.

This sequence belongs to the protein kinase superfamily. Ser/Thr protein kinase family. MAP kinase subfamily. HOG1 sub-subfamily. Mg(2+) is required as a cofactor. Dually phosphorylated on Thr-170 and Tyr-172, which activates the enzyme.

It catalyses the reaction L-seryl-[protein] + ATP = O-phospho-L-seryl-[protein] + ADP + H(+). The catalysed reaction is L-threonyl-[protein] + ATP = O-phospho-L-threonyl-[protein] + ADP + H(+). Its activity is regulated as follows. Activated by tyrosine and threonine phosphorylation. Functionally, mitogen-activated protein kinase required for growth on media where sorbitol or mannitol is the sole carbon source. In Aspergillus terreus (strain NIH 2624 / FGSC A1156), this protein is Mitogen-activated protein kinase mpkC (mpkC).